The following is a 562-amino-acid chain: NAD-dependent malic enzyme (562 aa).

Tyr101 (proton donor) is an active-site residue. Residue Arg154 participates in NAD(+) binding. Catalysis depends on Lys172, which acts as the Proton acceptor. The a divalent metal cation site is built by Glu243, Asp244, and Asp267. NAD(+) contacts are provided by Asp267 and Asn415.

The protein belongs to the malic enzymes family. Homotetramer. Requires Mg(2+) as cofactor. Mn(2+) is required as a cofactor.

It carries out the reaction (S)-malate + NAD(+) = pyruvate + CO2 + NADH. The enzyme catalyses oxaloacetate + H(+) = pyruvate + CO2. The chain is NAD-dependent malic enzyme from Aliivibrio salmonicida (strain LFI1238) (Vibrio salmonicida (strain LFI1238)).